The primary structure comprises 513 residues: t-SNARE domain-containing protein 1 (513 aa).

Disordered stretches follow at residues 1-23 (MSYG…GPSR) and 49-128 (ESKL…KPNF). Gly residues predominate over residues 7-19 (ARGGGLGSRGPFG). Position 378 is a phosphoserine (serine 378). The region spanning 416–478 (LEAIRLREEA…EAARQLLAGA (63 aa)) is the t-SNARE coiled-coil homology domain. The helical transmembrane segment at 491–511 (CFLSAGVTALLVIIIIIATSV) threads the bilayer.

It localises to the membrane. The polypeptide is t-SNARE domain-containing protein 1 (TSNARE1) (Homo sapiens (Human)).